Here is a 222-residue protein sequence, read N- to C-terminus: Putative thymidylate synthase (222 aa).

Cys139 is a catalytic residue.

Belongs to the thymidylate synthase family. Archaeal-type ThyA subfamily. In terms of assembly, monomer.

The protein resides in the cytoplasm. It functions in the pathway pyrimidine metabolism; dTTP biosynthesis. Functionally, may catalyze the biosynthesis of dTMP using an unknown cosubstrate. In Methanocaldococcus jannaschii (strain ATCC 43067 / DSM 2661 / JAL-1 / JCM 10045 / NBRC 100440) (Methanococcus jannaschii), this protein is Putative thymidylate synthase.